Here is a 396-residue protein sequence, read N- to C-terminus: S-adenosylmethionine synthase (396 aa).

ATP is bound at residue histidine 16. A Mg(2+)-binding site is contributed by aspartate 18. Glutamate 44 serves as a coordination point for K(+). L-methionine-binding residues include glutamate 57 and glutamine 100. The tract at residues 100-110 is flexible loop; it reads QSPDIAQGVNE. ATP-binding positions include 175-177, 242-243, aspartate 251, 257-258, alanine 274, and lysine 278; these read DAK, RF, and RK. Position 251 (aspartate 251) interacts with L-methionine. An L-methionine-binding site is contributed by lysine 282.

Belongs to the AdoMet synthase family. Homotetramer; dimer of dimers. Mg(2+) serves as cofactor. It depends on K(+) as a cofactor.

It is found in the cytoplasm. It carries out the reaction L-methionine + ATP + H2O = S-adenosyl-L-methionine + phosphate + diphosphate. It functions in the pathway amino-acid biosynthesis; S-adenosyl-L-methionine biosynthesis; S-adenosyl-L-methionine from L-methionine: step 1/1. Catalyzes the formation of S-adenosylmethionine (AdoMet) from methionine and ATP. The overall synthetic reaction is composed of two sequential steps, AdoMet formation and the subsequent tripolyphosphate hydrolysis which occurs prior to release of AdoMet from the enzyme. The polypeptide is S-adenosylmethionine synthase (Streptococcus suis (strain 05ZYH33)).